A 734-amino-acid chain; its full sequence is MHNKDKLMRCMYSMQTRLGEKDINLPQYYNNRELSWLDFNYRVLQESYDKNNPLLEKLNFISIFSSNLDEFFMVRVAGLKDQVKMGYDKPENKAQMTPQEQLDAIKIKNTDYVNTQYQRYNELIKELANYDIEMVKPEDLSDALIEKLEQEFKLSVLPTLTPLGIDAYHPFPKLNNKSLNIFVDIDTEDAINSAIVQIPSLIPRFLTLNEGTKQYVVMVEDVITYFINYLFTGYEVLNTFTFRITRNADLTIHEDGAEDLLIEIERFLKERKSGSAVRLELDCRTSEKENVEWLINQLEIEDNDIYYLDGPLDLTFLFGLVDHLSHKLKYLTYEKYTPQPPRSLGNKNIYQLSLERDIFFHHPYESFEPIVDFIRQAADDPNTIAIKQTLYRVSKDSPIINSLKEAAENGKQVTVLVELKARFDEENNVHWARMLEDAGCHVIYGMTHLKTHSKIALVVKRINNELTSFVHLGTGNYNDKTAKLYTDMGIITTNKDIAEDAINFFNYLSGYSTKPEYNKLIVAPYDIRDVFIDRIDKEIRSHLQHGNGKIMMKMNSLTDKTIIEKLFEASQAGVKIQLIIRGICCLKPGIPGISENIEVVSIVGRLLEHSRIYYFHNNSEAHIYLSSADVMTRNMIKRVEILFPVEDKSIGQRLVNYMNLQLSDNQKGRYQDAQGLYHYVENNSSPLNSQSYLMQEAIKYGEELKKQSVQPSGQPVHSRRGGSWMRKLKNTFKR.

Asn-67 provides a ligand contact to ATP. Residues Arg-392 and Arg-422 each coordinate Mg(2+). The 35-residue stretch at 447-481 folds into the PLD phosphodiesterase domain; that stretch reads THLKTHSKIALVVKRINNELTSFVHLGTGNYNDKT. Catalysis depends on His-452, which acts as the Phosphohistidine intermediate. The ATP site is built by Tyr-485, Arg-581, and His-609. The segment at 705–734 is disordered; sequence KKQSVQPSGQPVHSRRGGSWMRKLKNTFKR.

It belongs to the polyphosphate kinase 1 (PPK1) family. The cofactor is Mg(2+). Post-translationally, an intermediate of this reaction is the autophosphorylated ppk in which a phosphate is covalently linked to a histidine residue through a N-P bond.

It catalyses the reaction [phosphate](n) + ATP = [phosphate](n+1) + ADP. Functionally, catalyzes the reversible transfer of the terminal phosphate of ATP to form a long-chain polyphosphate (polyP). The protein is Polyphosphate kinase of Staphylococcus epidermidis (strain ATCC 12228 / FDA PCI 1200).